The chain runs to 446 residues: Exopolygalacturonase (446 aa).

An N-terminal signal peptide occupies residues 1–17; it reads MRVTDIISCALLQASIA. 4 N-linked (GlcNAc...) asparagine glycosylation sites follow: Asn53, Asn118, Asn134, and Asn204. One copy of the PbH1 1 repeat lies at 236 to 257; that stretch reads SDNIIIQNSNINNGDDCVSFKP. The active-site Proton donor is Asp250. Cys252 and Cys269 form a disulfide bridge. Asn258 and Asn270 each carry an N-linked (GlcNAc...) asparagine glycan. PbH1 repeat units lie at residues 259-279, 290-311, and 332-353; these read STNI…SVGS, VENI…RIKV, and VRNV…EITQ. His273 is an active-site residue. Residues Asn297, Asn302, Asn334, Asn359, and Asn369 are each glycosylated (N-linked (GlcNAc...) asparagine). PbH1 repeat units follow at residues 367–398 and 403–434; these read PSNL…VVCS and CSDI…QSQV. 2 cysteine pairs are disulfide-bonded: Cys397/Cys403 and Cys424/Cys436. A glycan (N-linked (GlcNAc...) asparagine) is linked at Asn435.

The protein belongs to the glycosyl hydrolase 28 family.

It is found in the secreted. It carries out the reaction [(1-&gt;4)-alpha-D-galacturonosyl](n) + H2O = alpha-D-galacturonate + [(1-&gt;4)-alpha-D-galacturonosyl](n-1). Functionally, hydrolysis of 1,4-alpha-D-galactosiduronic linkages in pectate and other galacturonans. The chain is Exopolygalacturonase (PGX1) from Cochliobolus carbonum (Maize leaf spot fungus).